The following is a 201-amino-acid chain: Large ribosomal subunit protein uL4 (201 aa).

The segment at 44 to 71 (RAQKTRAEVTGSGKKPWRQKGTGRARSG) is disordered.

This sequence belongs to the universal ribosomal protein uL4 family. As to quaternary structure, part of the 50S ribosomal subunit.

One of the primary rRNA binding proteins, this protein initially binds near the 5'-end of the 23S rRNA. It is important during the early stages of 50S assembly. It makes multiple contacts with different domains of the 23S rRNA in the assembled 50S subunit and ribosome. Functionally, forms part of the polypeptide exit tunnel. The chain is Large ribosomal subunit protein uL4 from Shigella flexneri serotype 5b (strain 8401).